The sequence spans 899 residues: Tubulin glycylase 3F (899 aa).

The region spanning 471–835 is the TTL domain; sequence FKDVIQIIKN…TEYYQIQNWK (365 aa). ATP contacts are provided by residues 642–645, K663, and D665; that span reads QKYI.

Its subcellular location is the cytoplasm. The protein resides in the cytoskeleton. It localises to the cilium basal body. Functionally, probable glycylase which modifies tubulin, generating side chains of glycine on the gamma-carboxyl groups of specific glutamate residues within the C-terminal tail of tubulin. The protein is Tubulin glycylase 3F (TTLL3F) of Tetrahymena thermophila (strain SB210).